The primary structure comprises 223 residues: Translation initiation factor 6 (223 aa).

This sequence belongs to the eIF-6 family.

Binds to the 50S ribosomal subunit and prevents its association with the 30S ribosomal subunit to form the 70S initiation complex. This Thermofilum pendens (strain DSM 2475 / Hrk 5) protein is Translation initiation factor 6.